The primary structure comprises 242 residues: Ribosomal RNA small subunit methyltransferase G (242 aa).

Residues glycine 78, leucine 83, 130 to 131 (AE), and arginine 151 contribute to the S-adenosyl-L-methionine site.

Belongs to the methyltransferase superfamily. RNA methyltransferase RsmG family.

Its subcellular location is the cytoplasm. Functionally, specifically methylates the N7 position of guanine in position 518 of 16S rRNA. This Salinispora arenicola (strain CNS-205) protein is Ribosomal RNA small subunit methyltransferase G.